Here is a 317-residue protein sequence, read N- to C-terminus: L-lactate dehydrogenase 2 (317 aa).

NAD(+) is bound by residues V16, D37, K42, Y68, and 82–83 (GA). Residues Q85 and R91 each contribute to the substrate site. Residues T104, 121–123 (ASN), and T146 contribute to the NAD(+) site. 123–126 (NPVD) serves as a coordination point for substrate. 151–154 (DTTR) is a binding site for substrate. Beta-D-fructose 1,6-bisphosphate is bound by residues R156 and H171. The active-site Proton acceptor is the H178. Y223 carries the post-translational modification Phosphotyrosine. T232 is a substrate binding site.

The protein belongs to the LDH/MDH superfamily. LDH family. In terms of assembly, homotetramer.

It is found in the cytoplasm. The catalysed reaction is (S)-lactate + NAD(+) = pyruvate + NADH + H(+). It participates in fermentation; pyruvate fermentation to lactate; (S)-lactate from pyruvate: step 1/1. Its activity is regulated as follows. Allosterically activated by fructose 1,6-bisphosphate (FBP). Its function is as follows. Catalyzes the conversion of lactate to pyruvate. This is L-lactate dehydrogenase 2 from Enterococcus faecalis (strain ATCC 700802 / V583).